The sequence spans 362 residues: Peptide chain release factor 1 (362 aa).

Gln-237 is subject to N5-methylglutamine.

This sequence belongs to the prokaryotic/mitochondrial release factor family. Post-translationally, methylated by PrmC. Methylation increases the termination efficiency of RF1.

The protein localises to the cytoplasm. Peptide chain release factor 1 directs the termination of translation in response to the peptide chain termination codons UAG and UAA. The protein is Peptide chain release factor 1 of Aeromonas salmonicida (strain A449).